The following is a 119-amino-acid chain: NADH-quinone oxidoreductase subunit A (119 aa).

A run of 3 helical transmembrane segments spans residues 9 to 29, 63 to 83, and 88 to 108; these read VILF…LGFL, LVAI…PWAV, and IGAT…VGFV.

Belongs to the complex I subunit 3 family. NDH-1 is composed of 14 different subunits. Subunits NuoA, H, J, K, L, M, N constitute the membrane sector of the complex.

Its subcellular location is the cell inner membrane. The enzyme catalyses a quinone + NADH + 5 H(+)(in) = a quinol + NAD(+) + 4 H(+)(out). In terms of biological role, NDH-1 shuttles electrons from NADH, via FMN and iron-sulfur (Fe-S) centers, to quinones in the respiratory chain. The immediate electron acceptor for the enzyme in this species is believed to be ubiquinone. Couples the redox reaction to proton translocation (for every two electrons transferred, four hydrogen ions are translocated across the cytoplasmic membrane), and thus conserves the redox energy in a proton gradient. In Leptothrix cholodnii (strain ATCC 51168 / LMG 8142 / SP-6) (Leptothrix discophora (strain SP-6)), this protein is NADH-quinone oxidoreductase subunit A.